The primary structure comprises 425 residues: MPYVDRQNRICGFLDIEENENSGKFLRRYFILDTQANCLLWYMDNPQNLAIGAGAVGSLQLTYISKVSIATPKQKPKTPFCFVINALSQRYFLQANDQKDLKDWVEALNQASKITVPKAGNLPLTTEVLKSLATPLALEKKPQVAYKTEIIGGVVVHTPINQNGGDGQEVGEPGSHAILRRSQSYIPTTGCRGPTGPPLIKSGYCVKQGNVRKSWKRRFFALDDFTICYFKCEQDREPLRTIFLKDVLKTHECLVKSGDLLMRDNLFEIITSSRTFYVQADSPEDMHSWIKEIGAAVQALKCHPREMSFSRSISLTRPGSSSLSGGPNSILCRGRAPGEERKTLCKAPSLASSWQPWTPVPQAGEKLLPTEETAEDSLFTPRLGESSTSAVLPSSRIRHRSEPQHPKEKPFVFNLDDENIRTSDV.

The PH 1 domain maps to 7–113 (QNRICGFLDI…WVEALNQASK (107 aa)). Residue lysine 141 forms a Glycyl lysine isopeptide (Lys-Gly) (interchain with G-Cter in SUMO2) linkage. Serine 184 carries the post-translational modification Phosphoserine. The region spanning 198–298 (PLIKSGYCVK…WIKEIGAAVQ (101 aa)) is the PH 2 domain. 2 positions are modified to phosphoserine: serine 314 and serine 349. The segment at 374 to 410 (AEDSLFTPRLGESSTSAVLPSSRIRHRSEPQHPKEKP) is disordered. Residues 400-410 (RSEPQHPKEKP) show a composition bias toward basic and acidic residues.

As to quaternary structure, binds MPDZ and PTPN13.

The protein localises to the cytoplasm. The protein resides in the cell membrane. Its subcellular location is the nucleus. In terms of biological role, binds specifically to phosphatidylinositol 3,4-diphosphate (PtdIns3,4P2), but not to other phosphoinositides. May recruit other proteins to the plasma membrane. The chain is Pleckstrin homology domain-containing family A member 2 (PLEKHA2) from Bos taurus (Bovine).